Consider the following 84-residue polypeptide: Large ribosomal subunit protein bL31B-2 (84 aa).

Belongs to the bacterial ribosomal protein bL31 family. Type B subfamily. Part of the 50S ribosomal subunit.

This Streptomyces coelicolor (strain ATCC BAA-471 / A3(2) / M145) protein is Large ribosomal subunit protein bL31B-2.